Here is a 188-residue protein sequence, read N- to C-terminus: Elongation factor P-like protein (188 aa).

This sequence belongs to the elongation factor P family.

The sequence is that of Elongation factor P-like protein from Xylella fastidiosa (strain 9a5c).